Reading from the N-terminus, the 463-residue chain is Heterogeneous nuclear ribonucleoprotein K (463 aa).

N-acetylmethionine is present on Met1. The tract at residues 1-37 is disordered; the sequence is METEQPEETFPNTETNGEFGKRPAEDMEEEQAFKRSR. Residues 1-276 are necessary for interaction with DDX1; the sequence is METEQPEETF…GRGGRPMPPS (276 aa). Basic and acidic residues predominate over residues 19 to 37; the sequence is FGKRPAEDMEEEQAFKRSR. N6-acetyllysine; alternate is present on Lys34. Lys34 participates in a covalent cross-link: Glycyl lysine isopeptide (Lys-Gly) (interchain with G-Cter in SUMO1); alternate. Lys34 is covalently cross-linked (Glycyl lysine isopeptide (Lys-Gly) (interchain with G-Cter in SUMO2); alternate). Ser36 bears the Phosphoserine mark. The residue at position 39 (Thr39) is a Phosphothreonine. The KH 1 domain maps to 42 to 104; the sequence is MVELRILLQS…ETIGEILKKI (63 aa). Glycyl lysine isopeptide (Lys-Gly) (interchain with G-Cter in SUMO2) cross-links involve residues Lys52 and Lys60. Repeat copies occupy residues 54–76 and 59–62. The tract at residues 54–421 is 2 X 22 AA approximate repeats; the sequence is AGAVIGKGGK…QIRHESGASI (368 aa). Residues 59–407 form a 5 X 4 AA repeats of G-X-G-G region; sequence GKGGKNIKAL…LAGSIIGKGG (349 aa). Residues Ser75 and Ser116 each carry the phosphoserine modification. The KH 2 domain occupies 144–209; sequence DCELRLLIHQ…DRVVECIKII (66 aa). A Glycyl lysine isopeptide (Lys-Gly) (interchain with G-Cter in SUMO1); alternate cross-link involves residue Lys163. Lys163 is covalently cross-linked (Glycyl lysine isopeptide (Lys-Gly) (interchain with G-Cter in SUMO2); alternate). Position 198 is an N6-acetyllysine (Lys198). The segment at 209-337 is interaction with ZIK1; the sequence is ILDLISESPI…RPGDRYDGMV (129 aa). Phosphoserine is present on residues Ser214 and Ser216. Residue Lys219 forms a Glycyl lysine isopeptide (Lys-Gly) (interchain with G-Cter in SUMO2); alternate linkage. Lys219 is modified (N6-succinyllysine; alternate). Residues 236-273 are RNA-binding RGG-box; the sequence is YGGFTMMFDDRRGRPVGFPMRGRGGFDRMPPGRGGRPM. A run of 3 repeats spans residues 245-250, 257-260, and 267-270. Positions 245-329 are 2 X 6 AA repeats of D-R-R-G-R-P; that stretch reads DRRGRPVGFP…LMAYDRRGRP (85 aa). Residues 250-329 form a disordered region; sequence PVGFPMRGRG…LMAYDRRGRP (80 aa). Residues 252–266 show a composition bias toward low complexity; it reads GFPMRGRGGFDRMPP. The span at 276–285 shows a compositional bias: basic and acidic residues; it reads SRRDYDDMSP. Ser284 is subject to Phosphoserine. The 3-4 repeat unit spans residues 295–298; sequence GRGG. Arg316 bears the Omega-N-methylarginine mark. The 2-2 repeat unit spans residues 324 to 329; that stretch reads DRRGRP. An Omega-N-methylarginine modification is found at Arg377. Ser379 bears the Phosphoserine mark. Tyr380 is subject to Phosphotyrosine. The KH 3 domain maps to 387-451; it reads IITTQVTIPK…DQIQNAQYLL (65 aa). 2 repeat units span residues 399–421 and 404–407. Residue Lys405 is modified to N6-acetyllysine; alternate. A Glycyl lysine isopeptide (Lys-Gly) (interchain with G-Cter in SUMO2); alternate cross-link involves residue Lys405. Ser420 carries the phosphoserine modification. Lys422 participates in a covalent cross-link: Glycyl lysine isopeptide (Lys-Gly) (interchain with G-Cter in SUMO1); alternate. A Glycyl lysine isopeptide (Lys-Gly) (interchain with G-Cter in SUMO2); alternate cross-link involves residue Lys422. Residue Lys422 forms a Glycyl lysine isopeptide (Lys-Gly) (interchain with G-Cter in SUMO); alternate linkage.

In terms of assembly, identified in the spliceosome C complex. Interacts with ANKRD28, RBM42 and ZIK1. Interacts with DDX1. Interacts with MDM2; this interaction leads to ubiquitination and proteasomal degradation. Interacts with p53/TP53. Interacts with BRDT. Interacts with IVNS1ABP. Interacts with PPIA/CYPA. Part of a transcription inhibitory ribonucleoprotein complex composed at least of the circular RNA circZNF827, ZNF827 and HNRNPL. Sumoylated by CBX4. Sumoylation is increased upon DNA damage, such as that produced by doxorubicin, etoposide, UV light and camptothecin, due to enhanced CBX4 phosphorylation by HIPK2 under these conditions. Post-translationally, ubiquitinated by MDM2. Doxorubicin treatment does not affect monoubiquitination, but slightly decreases HNRNPK poly-ubiquitination. In terms of processing, O-glycosylated (O-GlcNAcylated), in a cell cycle-dependent manner.

The protein resides in the cytoplasm. It is found in the nucleus. It localises to the nucleoplasm. The protein localises to the cell projection. Its subcellular location is the podosome. Functionally, one of the major pre-mRNA-binding proteins. Binds tenaciously to poly(C) sequences. Likely to play a role in the nuclear metabolism of hnRNAs, particularly for pre-mRNAs that contain cytidine-rich sequences. Can also bind poly(C) single-stranded DNA. Plays an important role in p53/TP53 response to DNA damage, acting at the level of both transcription activation and repression. When sumoylated, acts as a transcriptional coactivator of p53/TP53, playing a role in p21/CDKN1A and 14-3-3 sigma/SFN induction. As far as transcription repression is concerned, acts by interacting with long intergenic RNA p21 (lincRNA-p21), a non-coding RNA induced by p53/TP53. This interaction is necessary for the induction of apoptosis, but not cell cycle arrest. As part of a ribonucleoprotein complex composed at least of ZNF827, HNRNPL and the circular RNA circZNF827 that nucleates the complex on chromatin, may negatively regulate the transcription of genes involved in neuronal differentiation. The sequence is that of Heterogeneous nuclear ribonucleoprotein K (HNRNPK) from Oryctolagus cuniculus (Rabbit).